The following is a 127-amino-acid chain: UPF0102 protein Mmar10_3014 (127 aa).

Belongs to the UPF0102 family.

In Maricaulis maris (strain MCS10) (Caulobacter maris), this protein is UPF0102 protein Mmar10_3014.